The chain runs to 200 residues: Recombination protein RecR (200 aa).

The C4-type zinc finger occupies 58 to 75 (CPCCFCLKNFPESQCEFC). Positions 82 to 177 (STLCIVASPK…SISRLALGLP (96 aa)) constitute a Toprim domain.

This sequence belongs to the RecR family.

Its function is as follows. May play a role in DNA repair. It seems to be involved in an RecBC-independent recombinational process of DNA repair. It may act with RecF and RecO. This Chlamydia felis (strain Fe/C-56) (Chlamydophila felis) protein is Recombination protein RecR.